A 1203-amino-acid polypeptide reads, in one-letter code: Cingulin (1203 aa).

The head stretch occupies residues 7-357 (MAEPRGPVDH…VMISSGSTKA (351 aa)). The segment at 25-48 (EPVSGAEMGTLRRGGRRPAKDARA) is disordered. The ZIM signature appears at 48–62 (ASTYGVAVRVQGIAG). The segment at 54-67 (AVRVQGIAGQPFVV) is interaction with TJP1/ZO1. A disordered region spans residues 89–268 (EASGALGSDF…PPSGFSRSRQ (180 aa)). Ser-96, Ser-135, Ser-137, Ser-140, Ser-155, and Ser-165 each carry phosphoserine. A compositionally biased stretch (polar residues) spans 166-191 (PGSTIDTAPLSSVDSLINKFDSQLGG). Residues 207–231 (EQRKRSKSLDSRLPRDTLEERERQS) are compositionally biased toward basic and acidic residues. Ser-214, Ser-217, Ser-258, Ser-276, Ser-338, and Ser-351 each carry phosphoserine. Residues 246 to 267 (GSSKQPSQSQSPSPPSGFSRSR) are compositionally biased toward low complexity. A coiled-coil region spans residues 358–1160 (VAGQGELTRK…SLEKDSWRKA (803 aa)). An N6-acetyllysine modification is found at Lys-579. The span at 883–903 (ARREVADAQRQAKDWASEAEK) shows a compositional bias: basic and acidic residues. Disordered regions lie at residues 883-908 (ARREVADAQRQAKDWASEAEKTSGGL) and 1160-1181 (ASRSAAESALKHEGLSSDEEFD). The segment at 1161–1203 (SRSAAESALKHEGLSSDEEFDSVYDPSSIASLLTESNLQTSSC) is tail. Residues Ser-1175, Ser-1176, and Ser-1182 each carry the phosphoserine modification.

The protein belongs to the cingulin family. In terms of assembly, homodimer. Interacts with TJP1/ZO1 and SPEF1.

It is found in the cell junction. The protein resides in the tight junction. Functionally, probably plays a role in the formation and regulation of the tight junction (TJ) paracellular permeability barrier. This chain is Cingulin, found in Papio anubis (Olive baboon).